A 238-amino-acid polypeptide reads, in one-letter code: MSLEVIFGSNILLILVAYFIGSINFSIIVSKIFKKSDIREKGSKNAGATNMARNFGFKIGFLVFFLDVSKSFWFAIISAILRDFVPFFGAVITQLVVLFVIIGHVFPIYFKFKGGKGAATNLGMIASLNIILAIIGGIIFFAMIFRWKIVSLGSFITPFILVIFMIIPWMNSSIIAYVGYSDFYQPVRESFQGAWYLSSLFLFLAALIILFTHIPNIKKLIKKEESVLKFSKKSKKLA.

6 helical membrane passes run Val-5 to Phe-25, Phe-61 to Leu-81, Phe-88 to Ile-108, Ile-125 to Phe-145, Ile-149 to Trp-169, and Ala-194 to Ile-214.

This sequence belongs to the PlsY family. Probably interacts with PlsX.

The protein localises to the cell membrane. The catalysed reaction is an acyl phosphate + sn-glycerol 3-phosphate = a 1-acyl-sn-glycero-3-phosphate + phosphate. The protein operates within lipid metabolism; phospholipid metabolism. Its function is as follows. Catalyzes the transfer of an acyl group from acyl-phosphate (acyl-PO(4)) to glycerol-3-phosphate (G3P) to form lysophosphatidic acid (LPA). This enzyme utilizes acyl-phosphate as fatty acyl donor, but not acyl-CoA or acyl-ACP. The polypeptide is Glycerol-3-phosphate acyltransferase (Mycoplasma mobile (strain ATCC 43663 / 163K / NCTC 11711) (Mesomycoplasma mobile)).